A 419-amino-acid polypeptide reads, in one-letter code: Probable glycosidase C21B10.07 (419 aa).

Disordered stretches follow at residues 1–20 and 29–67; these read MGIPDSTTDSRHSLSSAALS and DPARKNESTNDVIDNHTDTEIDDHDNDHENLDSNNNNEN. A compositionally biased stretch (basic and acidic residues) spans 30–59; sequence PARKNESTNDVIDNHTDTEIDDHDNDHENL. A helical transmembrane segment spans residues 88–108; it reads FIWILIFIVALICSVLIGVLG. In terms of domain architecture, GH16 spans 122–387; it reads PSYKAKTYSL…WAGSSVYSSA (266 aa). Glutamate 237 functions as the Nucleophile in the catalytic mechanism. The active-site Proton donor is glutamate 242.

It belongs to the glycosyl hydrolase 16 family.

The protein localises to the membrane. The polypeptide is Probable glycosidase C21B10.07 (Schizosaccharomyces pombe (strain 972 / ATCC 24843) (Fission yeast)).